Reading from the N-terminus, the 829-residue chain is Cadherin-16 (829 aa).

The signal sequence occupies residues 1–18 (MVPAWLWLLCFSVPQALV). Residues 19 to 786 (EVSPTTLHVE…MKGMPTKLSA (768 aa)) lie on the Extracellular side of the membrane. Cadherin domains lie at 25-126 (LHVE…VPQF), 131-235 (YSAR…SIVE), 242-336 (EPVH…APVC), 341-449 (PPVS…APEF), 455-564 (GPVS…PPRL), and 569-665 (YEAD…APAL). N-linked (GlcNAc...) asparagine glycans are attached at residues Asn517, Asn602, and Asn722. Residues 666–786 (PLAPMPSRHL…MKGMPTKLSA (121 aa)) form an ectodomain G region. A helical membrane pass occupies residues 787–807 (VGILVGTLAAIGFFLILIFTH). Residues 808 to 829 (LALARKKDLDAPADNVPLKAAA) lie on the Cytoplasmic side of the membrane.

In terms of tissue distribution, kidney specific. Limited to the basolateral membranes of renal tubular epithelial cells.

It is found in the cell membrane. Its function is as follows. Cadherins are calcium-dependent cell adhesion proteins. They preferentially interact with themselves in a homophilic manner in connecting cells; cadherins may thus contribute to the sorting of heterogeneous cell types. The polypeptide is Cadherin-16 (CDH16) (Oryctolagus cuniculus (Rabbit)).